The primary structure comprises 277 residues: Putative phosphoenolpyruvate synthase regulatory protein (277 aa).

Position 157-164 (Gly157–Thr164) interacts with ADP.

The protein belongs to the pyruvate, phosphate/water dikinase regulatory protein family. PSRP subfamily.

It catalyses the reaction [pyruvate, water dikinase] + ADP = [pyruvate, water dikinase]-phosphate + AMP + H(+). The catalysed reaction is [pyruvate, water dikinase]-phosphate + phosphate + H(+) = [pyruvate, water dikinase] + diphosphate. Its function is as follows. Bifunctional serine/threonine kinase and phosphorylase involved in the regulation of the phosphoenolpyruvate synthase (PEPS) by catalyzing its phosphorylation/dephosphorylation. This chain is Putative phosphoenolpyruvate synthase regulatory protein, found in Klebsiella pneumoniae subsp. pneumoniae (strain ATCC 700721 / MGH 78578).